Here is a 325-residue protein sequence, read N- to C-terminus: uncharacterized protein (325 aa).

Residues 296 to 325 (QRTLSSSMEEADRPRRMSVTQPHLPPVPSA) form a disordered region.

It belongs to the NDRG family.

This is an uncharacterized protein from Caenorhabditis elegans.